A 94-amino-acid polypeptide reads, in one-letter code: Integration host factor subunit beta (94 aa).

This sequence belongs to the bacterial histone-like protein family. Heterodimer of an alpha and a beta chain.

Its function is as follows. This protein is one of the two subunits of integration host factor, a specific DNA-binding protein that functions in genetic recombination as well as in transcriptional and translational control. The sequence is that of Integration host factor subunit beta (ihfB) from Haemophilus influenzae (strain ATCC 51907 / DSM 11121 / KW20 / Rd).